A 263-amino-acid chain; its full sequence is HTH-type transcriptional repressor NanR (263 aa).

Residues 1–22 (MGLMNAFDSQTEDSSPAIGRNL) are disordered. The HTH gntR-type domain maps to 30-98 (KKLSEMVEEE…NGERARVSRP (69 aa)). Residues 58-77 (ERELMAFFNVGRPSVREALA) constitute a DNA-binding region (H-T-H motif).

The protein belongs to the NanR family.

Functionally, transcriptional repressor that controls expression of the genes required for the catabolism of sialic acids. The sequence is that of HTH-type transcriptional repressor NanR from Escherichia coli (strain 55989 / EAEC).